The sequence spans 156 residues: Small ribosomal subunit protein uS7 (156 aa).

This sequence belongs to the universal ribosomal protein uS7 family. Part of the 30S ribosomal subunit. Contacts proteins S9 and S11.

One of the primary rRNA binding proteins, it binds directly to 16S rRNA where it nucleates assembly of the head domain of the 30S subunit. Is located at the subunit interface close to the decoding center, probably blocks exit of the E-site tRNA. In Thermodesulfovibrio yellowstonii (strain ATCC 51303 / DSM 11347 / YP87), this protein is Small ribosomal subunit protein uS7.